Reading from the N-terminus, the 365-residue chain is Flagellar P-ring protein (365 aa).

The signal sequence occupies residues Met1–Ala22.

It belongs to the FlgI family. In terms of assembly, the basal body constitutes a major portion of the flagellar organelle and consists of four rings (L,P,S, and M) mounted on a central rod.

It localises to the periplasm. Its subcellular location is the bacterial flagellum basal body. Its function is as follows. Assembles around the rod to form the L-ring and probably protects the motor/basal body from shearing forces during rotation. The chain is Flagellar P-ring protein from Marinobacter nauticus (strain ATCC 700491 / DSM 11845 / VT8) (Marinobacter aquaeolei).